We begin with the raw amino-acid sequence, 385 residues long: Glucose-fructose oxidoreductase domain-containing protein 2 (385 aa).

An N-terminal signal peptide occupies residues 1-25; the sequence is MKMLPGVGVFGTGSSARVLVPLLRA.

This sequence belongs to the Gfo/Idh/MocA family.

The protein resides in the secreted. It is found in the extracellular space. The protein localises to the extracellular matrix. Functionally, promotes matrix assembly. This Homo sapiens (Human) protein is Glucose-fructose oxidoreductase domain-containing protein 2 (GFOD2).